A 116-amino-acid polypeptide reads, in one-letter code: MRVKGGTVTRARRKKWLKLAKGYFGHKSIGYKVAKQAVVKSWTYAFRDRKQIKREFRKLWIARINAATRAEGLSYSKFINGLKRANVTINRKMLSELAISEPKTFAMLIKIARDAK.

This sequence belongs to the bacterial ribosomal protein bL20 family.

Its function is as follows. Binds directly to 23S ribosomal RNA and is necessary for the in vitro assembly process of the 50S ribosomal subunit. It is not involved in the protein synthesizing functions of that subunit. The sequence is that of Large ribosomal subunit protein bL20 (rplT) from Mycoplasmopsis fermentans (Mycoplasma fermentans).